A 454-amino-acid chain; its full sequence is Toluate 1,2-dioxygenase subunit alpha (454 aa).

The 98-residue stretch at Ile51–Leu148 folds into the Rieske domain. 4 residues coordinate [2Fe-2S] cluster: Cys92, His94, Cys112, and His115. 2 residues coordinate Fe cation: His221 and His226.

This sequence belongs to the bacterial ring-hydroxylating dioxygenase alpha subunit family. In terms of assembly, this dioxygenase system consists of three proteins: the two subunits of the hydroxylase component (XylX and XylY), and an electron transfer component (XylZ). Requires [2Fe-2S] cluster as cofactor. Fe cation is required as a cofactor.

It functions in the pathway xenobiotic degradation; toluene degradation. The sequence is that of Toluate 1,2-dioxygenase subunit alpha (xylX) from Pseudomonas putida (Arthrobacter siderocapsulatus).